Consider the following 505-residue polypeptide: MSTAPNAKNNISLKKSVGDVWPLTAKRVLMRVDFNVPMQNGHITNDYRIRAAIPTIRRVIDQGGICILLSHLGRPRGVSMVAGVRDIRRRYHEAQFHDNKGKTAFFSVLPGEEKVKILAKSSAREEATHISPEVKSGKTMLFARLPEDEKKSLLMQYLNENKDSALPQMSVSAGYEEQYSLRPVAVRLAELLGQHVYFAHDCLDARVEVSRLKRGNVMLLENVRFYSEENGENAEEREAMAKILASYGDVYISDAFGAAHRDSATMTGIPKILGHGAAGYLMEKEISYFAKVLGNPPRPLEAIVGGAKVSEKIQLLDNMKQRIDYLLIGGAMAYTFLKAQGYSIGKSKCEESKLEFARSLLKKAEDRKVQVILPIDHVCHTEFKAVDSPLITEDQNIPEGHMALDIGPKTIEKYVQTIGKCKSAIWNGPMGVFEMVPYSKGTFAIAKAMGRGTQKRGLMSIIGGGESAGAAEAARISHVSTGGGASLELLEGKTLPGVAVLDDKE.

(2R)-3-phosphoglycerate contacts are provided by valine 32, aspartate 33, phenylalanine 34, asparagine 35, arginine 48, serine 70, histidine 71, glycine 73, arginine 74, arginine 224, histidine 260, and arginine 261. Glycine 306 and alanine 307 together coordinate ADP. Glycine 306 lines the CDP pocket. AMP contacts are provided by alanine 307 and lysine 308. Alanine 307 lines the ATP pocket. Alanine 307 contacts Mg(2+). Lysine 308 serves as a coordination point for (2R)-3-phosphoglycerate. Position 311 (glutamate 311) interacts with CDP. Glutamate 311 is a binding site for Mg(2+). Lysine 312 and glycine 330 together coordinate ADP. Lysine 312 is a binding site for AMP. Lysine 312 is an ATP binding site. Glycine 330 is a CDP binding site. AMP-binding residues include alanine 331 and alanine 403. Residues alanine 331 and alanine 403 each coordinate ATP. Residues alanine 403 and asparagine 427 each coordinate ADP. Positions 428 and 433 each coordinate CDP. 4 residues coordinate ADP: phenylalanine 433, glutamate 434, glutamate 466, and serine 467. Residue glutamate 434 coordinates AMP. Residues glutamate 434, glutamate 466, and serine 467 each contribute to the ATP site. Residue glutamate 466 participates in Mg(2+) binding.

It belongs to the phosphoglycerate kinase family. In terms of assembly, monomer. Requires Mg(2+) as cofactor.

The catalysed reaction is (2R)-3-phosphoglycerate + ATP = (2R)-3-phospho-glyceroyl phosphate + ADP. It participates in carbohydrate degradation; glycolysis; pyruvate from D-glyceraldehyde 3-phosphate: step 2/5. The polypeptide is Phosphoglycerate kinase A (Trypanosoma brucei brucei).